The primary structure comprises 319 residues: Annexin A4 (319 aa).

The residue at position 2 (A2) is an N-acetylalanine. T7 is subject to Phosphothreonine. At S12 the chain carries Phosphoserine. Annexin repeat units follow at residues 14–85, 86–157, 169–241, and 245–316; these read FSAT…GMIT, PTVL…SLSA, ALMR…AIVK, and NKSA…ILCG. An N6-acetyllysine mark is found at K213, K293, and K300.

Belongs to the annexin family. Expressed in pancreas (at protein level). Also detected in liver, spleen, intestine, stomach, kidney, and adrenal glands.

It is found in the zymogen granule membrane. In terms of biological role, calcium/phospholipid-binding protein which promotes membrane fusion and is involved in exocytosis. The protein is Annexin A4 (ANXA4) of Canis lupus familiaris (Dog).